A 393-amino-acid chain; its full sequence is 5-azacytidine-induced protein 2 (393 aa).

The homodimerization stretch occupies residues 1-198 (MDALVEDDIC…IELQKAKQTD (198 aa)). Residues 40-198 (ALVTAYEDIK…IELQKAKQTD (159 aa)) are a coiled coil. An interaction with TBK1 and IKBKE region spans residues 217 to 258 (SDNMQSAYWELKREMSNLHLVTQVQAELLRKLKTPAAIKKAC). A Phosphoserine modification is found at Ser319. 2 disordered regions span residues 321-340 (TDHE…HNSY) and 345-393 (LEDN…HYKH). The residue at position 354 (Ser354) is a Phosphoserine. Over residues 384–393 (QHNQNCHYKH) the composition is skewed to polar residues.

Homodimer. Interacts with IKBKE, TBK1 and TICAM1. Interacts with TAX1BP1. Interacts with CALCOCO2. In terms of processing, ubiquitinated via 'Lys-48'-linked polyubiquitination by TRIM38, leading to its degradation.

It is found in the cytoplasm. In terms of biological role, adapter protein which binds TBK1 and IKBKE playing a role in antiviral innate immunity. Activates serine/threonine-protein kinase TBK1 and facilitates its oligomerization. Enhances the phosphorylation of NF-kappa-B p65 subunit RELA by TBK1. Promotes TBK1-induced as well as TNF-alpha or PMA-induced activation of NF-kappa-B. Participates in IFNB promoter activation via TICAM1. The polypeptide is 5-azacytidine-induced protein 2 (AZI2) (Bos taurus (Bovine)).